A 143-amino-acid chain; its full sequence is MFMGEYQHNIDIKGRLIVPAKFRELLGDNFVITRGLDKCLFAYPQEEWKKLEEKLQTLPLTKKDARSFTRFFFSGASECELDKQGRINIPSNLLQYADLEKETVIIGVSSRIEIWSKSEWDNVFNEAEESFADLAENMIGFDI.

SpoVT-AbrB domains follow at residues 5–47 (EYQH…PQEE) and 76–119 (ASEC…SKSE).

Belongs to the MraZ family. Forms oligomers.

The protein localises to the cytoplasm. It is found in the nucleoid. This chain is Transcriptional regulator MraZ, found in Listeria welshimeri serovar 6b (strain ATCC 35897 / DSM 20650 / CCUG 15529 / CIP 8149 / NCTC 11857 / SLCC 5334 / V8).